We begin with the raw amino-acid sequence, 210 residues long: Syntaxin-binding protein 6 (210 aa).

The residue at position 2 (S2) is an N-acetylserine. The region spanning 151-210 is the v-SNARE coiled-coil homology domain; the sequence is GNSILHSAADSVTSAVQKASQALNERGERLGRAEEKTEDLKNSAQQFAETAHKLAMKHKC.

As to quaternary structure, part of a ternary complex containing SNAP25 and STX1A that can be dissociated by NAPA and NSF. Interacts with STX4A. In terms of tissue distribution, detected at low levels in brain, and at very low levels in heart, adrenal gland, testis, liver and kidney.

It is found in the cytoplasm. The protein localises to the membrane. Functionally, forms non-fusogenic complexes with SNAP25 and STX1A and may thereby modulate the formation of functional SNARE complexes and exocytosis. The polypeptide is Syntaxin-binding protein 6 (STXBP6) (Homo sapiens (Human)).